The following is a 599-amino-acid chain: Peptidyl-Asp metalloendopeptidase (599 aa).

Positions 1–20 (MKKSLLCSTLALAVASAAQA) are cleaved as a signal peptide. Histidine 164 lines the Zn(2+) pocket. Glutamate 165 is a catalytic residue. 2 residues coordinate Zn(2+): histidine 168 and histidine 174. The disordered stretch occupies residues 265-285 (PTKVPGTVNPGSGGDTPTPPD). The region spanning 458-583 (YDFESGIGGW…KRAELMILSG (126 aa)) is the CBM-cenC domain.

Belongs to the peptidase M72 family. As to quaternary structure, interacts with BamI, the product of its coregulated adjacent gene, which inhibits its protease activity. It depends on Zn(2+) as a cofactor. Made as a membrane-associated pre-pro-protein, which is exported to the periplasm with removal of the signal peptide, leading to a protein with a molecular mass of 65 kDa, that likely contains the metzincin domain plus tandem carbohydrate-binding domains. Undergoes processing during export to the extracellular milieu, probably by autocatalysis, yielding a (mature length) 25 kDa protein that most likely corresponds to the metzincin domain only.

The protein resides in the secreted. It carries out the reaction Cleavage of Xaa-|-Asp, Xaa-|-Glu and Xaa-|-cysteic acid bonds.. Is inhibited by BamI, the product of its coregulated adjacent gene. Its function is as follows. Metalloprotease with endopeptidase activity. Specifically cleaves on the N-terminal side of aspartyl, glutamyl and cysteic acid residues. Mep72 appears to be a secreted biofilm-specific regulator that affects the processing of a very specific subset of virulence factors exported by the type III secretion machinery as well as flagellar proteins. Binds directly to ExoS and PcrV and affects the processing of these proteins in the biofilm secretome, but contrary to expectation, Mep72 seems to protect these targets against proteolytic processing/degradation. This is Peptidyl-Asp metalloendopeptidase from Pseudomonas aeruginosa (strain ATCC 15692 / DSM 22644 / CIP 104116 / JCM 14847 / LMG 12228 / 1C / PRS 101 / PAO1).